The primary structure comprises 336 residues: uncharacterized protein (336 aa).

Positions 39 and 166 each coordinate NADP(+).

This sequence belongs to the NAD(P)-dependent epimerase/dehydratase family. Dihydroflavonol-4-reductase subfamily.

The protein resides in the cytoplasm. Its subcellular location is the nucleus. This is an uncharacterized protein from Schizosaccharomyces pombe (strain 972 / ATCC 24843) (Fission yeast).